A 1025-amino-acid polypeptide reads, in one-letter code: Multidrug resistance protein MdtC (1025 aa).

The next 12 helical transmembrane spans lie at 3-23 (FFAL…AITL), 333-353 (EVEQ…FLFL), 360-380 (IIPA…MYLC), 387-407 (LSLM…IVVL), 431-451 (VGFT…PLLL), 463-483 (FAVT…TLTP), 528-548 (LVGV…ISIP), 853-873 (VILI…LYES), 875-895 (VHPL…LLAL), 897-917 (LFNA…IGIV), 953-973 (PIMM…LSGG), and 984-1004 (ITIV…TPVV).

It belongs to the resistance-nodulation-cell division (RND) (TC 2.A.6) family. MdtC subfamily. As to quaternary structure, part of a tripartite efflux system composed of MdtA, MdtB and MdtC. MdtC forms a heteromultimer with MdtB.

It is found in the cell inner membrane. Functionally, the MdtABC tripartite complex confers resistance against novobiocin and deoxycholate. This Escherichia coli (strain SMS-3-5 / SECEC) protein is Multidrug resistance protein MdtC.